The sequence spans 612 residues: Dihydroxy-acid dehydratase (612 aa).

Asp81 contributes to the Mg(2+) binding site. [2Fe-2S] cluster is bound at residue Cys122. Residues Asp123 and Lys124 each contribute to the Mg(2+) site. Position 124 is an N6-carboxylysine (Lys124). [2Fe-2S] cluster is bound at residue Cys195. A Mg(2+)-binding site is contributed by Glu491. Ser517 functions as the Proton acceptor in the catalytic mechanism.

It belongs to the IlvD/Edd family. As to quaternary structure, homodimer. It depends on [2Fe-2S] cluster as a cofactor. Requires Mg(2+) as cofactor.

The catalysed reaction is (2R)-2,3-dihydroxy-3-methylbutanoate = 3-methyl-2-oxobutanoate + H2O. It catalyses the reaction (2R,3R)-2,3-dihydroxy-3-methylpentanoate = (S)-3-methyl-2-oxopentanoate + H2O. It functions in the pathway amino-acid biosynthesis; L-isoleucine biosynthesis; L-isoleucine from 2-oxobutanoate: step 3/4. It participates in amino-acid biosynthesis; L-valine biosynthesis; L-valine from pyruvate: step 3/4. Functions in the biosynthesis of branched-chain amino acids. Catalyzes the dehydration of (2R,3R)-2,3-dihydroxy-3-methylpentanoate (2,3-dihydroxy-3-methylvalerate) into 2-oxo-3-methylpentanoate (2-oxo-3-methylvalerate) and of (2R)-2,3-dihydroxy-3-methylbutanoate (2,3-dihydroxyisovalerate) into 2-oxo-3-methylbutanoate (2-oxoisovalerate), the penultimate precursor to L-isoleucine and L-valine, respectively. The sequence is that of Dihydroxy-acid dehydratase from Rhizobium meliloti (strain 1021) (Ensifer meliloti).